The primary structure comprises 502 residues: MATAAVIGLNTGKRLLSSSFYHSDVTEKFLSVNDHCSSQYHIASTKSGITAKKASNYSPSFPSSNRHTQSAKALKESVDVASTEKPWLPNGTDKELEEECYDDDDLISHSVEAILLLQKSMLEKSWNLSFEKAVSSEYPGKGTIRKKKIPVITCSGISARQRRIGAKKKTNMTHVKAVSDVSSGKQVRGYVKGVISEDVLSHVEVVRLSKKIKSGLRLDDHKSRLKDRLGCEPSDEQLAVSLKISRAELQAWLMECHLAREKLAMSNVRLVMSIAQRYDNLGAEMSDLVQGGLIGLLRGIEKFDSSKGFRISTYVYWWIRQGVSRALVDNSRTLRLPTHLHERLGLIRNAKLRLQEKGITPSIDRIAESLNMSQKKVRNATEAVSKVFSLDRDAFPSLNGLPGETHHSYIADTRLENNPWHGYDDLALKEEVSKLISATLGEREKEIIRLYYGLDKECLTWEDISKRIGLSRERVRQVGLVALEKLKHAARKRKMEAMILKN.

The transit peptide at 1–23 directs the protein to the chloroplast; it reads MATAAVIGLNTGKRLLSSSFYHS. Positions 57 to 71 are enriched in polar residues; the sequence is YSPSFPSSNRHTQSA. The tract at residues 57–92 is disordered; sequence YSPSFPSSNRHTQSAKALKESVDVASTEKPWLPNGT. Thr-170 is subject to Phosphothreonine. The short motif at 287 to 300 is the Polymerase core binding element; the sequence is DLVQGGLIGLLRGI. Residues 461-480 constitute a DNA-binding region (H-T-H motif); that stretch reads WEDISKRIGLSRERVRQVGL.

This sequence belongs to the sigma-70 factor family. As to quaternary structure, interacts with SIB1 in chloroplast. Binds to CSK. Post-translationally, the phosphorylation of Thr-170 mediated by oxidative conditions of plastoquinone (PQ) changes the promoter specificity, selectively inhibiting the transcription of the psaA gene, which encodes a PS-I protein. Phosphorylation of the holoenzyme occurs in the dark. This phosphorylation in response to plastoquinone redox state modification is mediated by CSK. In terms of tissue distribution, highly expressed in leaves, and to a lesser extent in roots. Expressed in old seedlings (8 days), cotyledons, hypocotyls, leaves, sepals and siliques.

The protein resides in the plastid. Its subcellular location is the chloroplast. In terms of biological role, essential protein. Sigma factors are initiation factors that promote the attachment of plastid-encoded RNA polymerase (PEP) to specific initiation sites and are then released. Controls the transcription of the psaA gene and thus modulates photosystem stoichiometry. Thereby maintains a harmonious electron flow and photosynthetic efficiency. This chain is RNA polymerase sigma factor sigA (SIGA), found in Arabidopsis thaliana (Mouse-ear cress).